We begin with the raw amino-acid sequence, 128 residues long: Large ribosomal subunit protein bL17 (128 aa).

This sequence belongs to the bacterial ribosomal protein bL17 family. In terms of assembly, part of the 50S ribosomal subunit. Contacts protein L32.

This Streptococcus equi subsp. equi (strain 4047) protein is Large ribosomal subunit protein bL17.